Consider the following 201-residue polypeptide: FMN-dependent NADH:quinone oxidoreductase (201 aa).

FMN contacts are provided by residues serine 10, 16–18, 96–99, and 140–143; these read SQS, MYNF, and SRGG.

It belongs to the azoreductase type 1 family. In terms of assembly, homodimer. FMN is required as a cofactor.

It catalyses the reaction 2 a quinone + NADH + H(+) = 2 a 1,4-benzosemiquinone + NAD(+). It carries out the reaction N,N-dimethyl-1,4-phenylenediamine + anthranilate + 2 NAD(+) = 2-(4-dimethylaminophenyl)diazenylbenzoate + 2 NADH + 2 H(+). Functionally, quinone reductase that provides resistance to thiol-specific stress caused by electrophilic quinones. Also exhibits azoreductase activity. Catalyzes the reductive cleavage of the azo bond in aromatic azo compounds to the corresponding amines. The polypeptide is FMN-dependent NADH:quinone oxidoreductase (Yersinia enterocolitica serotype O:8 / biotype 1B (strain NCTC 13174 / 8081)).